A 401-amino-acid polypeptide reads, in one-letter code: L-rhamnonate dehydratase (401 aa).

Substrate-binding residues include His29 and Arg55. 3 residues coordinate Mg(2+): Asp222, Glu248, and Glu276. The active-site Proton acceptor is His325. Glu345 contributes to the substrate binding site.

This sequence belongs to the mandelate racemase/muconate lactonizing enzyme family. RhamD subfamily. As to quaternary structure, homooctamer; tetramer of dimers. It depends on Mg(2+) as a cofactor.

The catalysed reaction is L-rhamnonate = 2-dehydro-3-deoxy-L-rhamnonate + H2O. Its function is as follows. Catalyzes the dehydration of L-rhamnonate to 2-keto-3-deoxy-L-rhamnonate (KDR). In Klebsiella pneumoniae subsp. pneumoniae (strain ATCC 700721 / MGH 78578), this protein is L-rhamnonate dehydratase.